A 185-amino-acid chain; its full sequence is Cuticle protein 18.6, isoform B (185 aa).

6 consecutive repeat copies span residues 21–24 (AAPA), 33–36 (AAPV), 41–44 (AAPV), 133–136 (AAPV), 139–142 (AAPV), and 150–153 (AAPV). Residues 64-134 (HPQYSFAYNV…KEAGAHPAAA (71 aa)) enclose the Chitin-binding type R&amp;R domain.

Functionally, component of the cuticle of migratory locust which contains more than 100 different structural proteins. This Locusta migratoria (Migratory locust) protein is Cuticle protein 18.6, isoform B.